Reading from the N-terminus, the 193-residue chain is Interleukin-18 (193 aa).

The propeptide occupies M1 to D36.

The protein belongs to the IL-1 family. As to quaternary structure, forms a ternary complex with ligand-binding receptor subunit IL18R1 and signaling receptor subunit IL18RAP at the plasma membrane. Mature IL18 first binds to IL18R1 forming a low affinity binary complex, which then interacts with IL18RAP to form a high affinity ternary complex that signals inside the cell. Interacts with cargo receptor TMED10; the interaction mediates the translocation from the cytoplasm into the ERGIC (endoplasmic reticulum-Golgi intermediate compartment) and thereby secretion. Post-translationally, the pro-IL-18 precursor is processed by CASP1, CASP4 or CASP5 to yield its mature, active form. The pro-IL-18 precursor features autoinhibitory interactions between the propeptide and the post-cleavage-site region, preventing recognition by the IL18R1 receptor. Processing by CASP1, CASP4 or CASP5 induces conformational changes to generate critical receptor-binding sites. The mature form is then secreted and released in the extracellular milieu by passing through the gasdermin-D (GSDMD) pore. In contrast, cleavage by CASP3 inactivates IL18.

Its subcellular location is the cytoplasm. The protein localises to the cytosol. It localises to the secreted. In terms of biological role, pro-inflammatory cytokine primarily involved in epithelial barrier repair, polarized T-helper 1 (Th1) cell and natural killer (NK) cell immune responses. Upon binding to IL18R1 and IL18RAP, forms a signaling ternary complex which activates NF-kappa-B, triggering synthesis of inflammatory mediators. Synergizes with IL12/interleukin-12 to induce IFNG synthesis from T-helper 1 (Th1) cells and natural killer (NK) cells. Involved in transduction of inflammation downstream of pyroptosis: its mature form is specifically released in the extracellular milieu by passing through the gasdermin-D (GSDMD) pore. This chain is Interleukin-18 (IL18), found in Bos taurus (Bovine).